A 107-amino-acid chain; its full sequence is Homeobox protein HD-7 (107 aa).

Residues 21 to 80 (KPGEKVRKSEFQKEVLKKVYQATPYPTWENKIDIGILISLSPRAVDIWFQNKRHINKGKN) constitute a DNA-binding region (homeobox).

Its subcellular location is the nucleus. The protein is Homeobox protein HD-7 (HD-7) of Encephalitozoon cuniculi (strain GB-M1) (Microsporidian parasite).